The following is a 477-amino-acid chain: Prolyl tri/tetrapeptidyl aminopeptidase (477 aa).

The signal sequence occupies residues 1-27; that stretch reads MRKALRSLLAASMLIGAIGAGSATAEA. Positions 28–33 are excised as a propeptide; sequence ASITAP. Residues 448–477 are disordered; the sequence is QKDEKAAKPLAPFDAKLDRVKNDKQSALRP. The segment covering 462-477 has biased composition (basic and acidic residues); the sequence is AKLDRVKNDKQSALRP.

This sequence belongs to the peptidase S37 family.

The protein localises to the secreted. It is found in the cell surface. With respect to regulation, completely inhibited by the serine protease inhibitor phenylmethylsulfonyl fluoride. Partially inhibited by the serine protease inhibitor Pefabloc. Not inhibited by cysteine proteinase-specific or metalloproteinase-specific inhibitors. Not inhibited by prolinal or its derivatives. EDTA and EGTA both partially inhibit this enzyme. EDTA has no effect on activity. In terms of biological role, has proline-specific tripeptidyl aminopeptidase and tetrapeptidyl aminopeptidase activity. Activity is highest against tripeptides containing an Ala-Pro motif. Involved in the final processing of transglutaminase, by removing either the tetrapeptide Phe-Arg-Ala-Pro left after TAMEP or SAM-P45 hydrolysis, or the tripeptide Arg-Ala-Pro left after SGMP II hydrolysis in a single step. The protein is Prolyl tri/tetrapeptidyl aminopeptidase (ptp) of Streptomyces mobaraensis (Streptoverticillium mobaraense).